Consider the following 433-residue polypeptide: Probable imidazolonepropionase (433 aa).

Tyrosine 160 and histidine 193 together coordinate 4-imidazolone-5-propanoate. N-formimidoyl-L-glutamate is bound at residue tyrosine 160. Histidine 261 serves as a coordination point for Fe(3+). Histidine 261 contacts Zn(2+). A 4-imidazolone-5-propanoate-binding site is contributed by glutamate 264. Fe(3+) is bound at residue aspartate 335. Aspartate 335 contacts Zn(2+). Residue asparagine 337 coordinates N-formimidoyl-L-glutamate.

This sequence belongs to the metallo-dependent hydrolases superfamily. HutI family. It depends on Zn(2+) as a cofactor. Requires Fe(3+) as cofactor.

The catalysed reaction is 4-imidazolone-5-propanoate + H2O = N-formimidoyl-L-glutamate. Its pathway is amino-acid degradation; L-histidine degradation into L-glutamate; N-formimidoyl-L-glutamate from L-histidine: step 3/3. This Danio rerio (Zebrafish) protein is Probable imidazolonepropionase (amdhd1).